Here is a 271-residue protein sequence, read N- to C-terminus: Interleukin-1 alpha (271 aa).

Positions 1 to 112 are excised as a propeptide; that stretch reads MAKVPDMFED…DSEEEIIKPR (112 aa). Lysine 82 is modified (N6-acetyllysine). The interval 82–86 is nuclear localization signal (NLS); it reads KKRRL. Serine 87 carries the post-translational modification Phosphoserine. Residues asparagine 102, asparagine 121, asparagine 137, and asparagine 141 are each glycosylated (N-linked (GlcNAc...) asparagine).

It belongs to the IL-1 family. In terms of assembly, monomer. Interacts with TMED10; the interaction mediates the translocation from the cytoplasm into the ERGIC (endoplasmic reticulum-Golgi intermediate compartment) and thereby secretion. Interacts with IL1R1. Interacts with S100A13; this interaction is the first step in the export of IL1A, followed by direct translocation of this complex across the plasma membrane. Acetylated within its nuclear localization sequence, which impacts subcellular localization. Post-translationally, proteolytic processed by CAPN1 in a calcium-dependent manner. Cleavage from 31 kDa precursor to 18 kDa biologically active molecules. In terms of processing, phosphorylated. Phosphorylation greatly enhances susceptibility to digestion and promotes the conversion of pre-IL1A alpha to the biologically active IL1A.

It localises to the nucleus. The protein resides in the cytoplasm. The protein localises to the secreted. In terms of biological role, cytokine constitutively present intracellularly in nearly all resting non-hematopoietic cells that plays an important role in inflammation and bridges the innate and adaptive immune systems. After binding to its receptor IL1R1 together with its accessory protein IL1RAP, forms the high affinity interleukin-1 receptor complex. Signaling involves the recruitment of adapter molecules such as MYD88, IRAK1 or IRAK4. In turn, mediates the activation of NF-kappa-B and the three MAPK pathways p38, p42/p44 and JNK pathways. Within the cell, acts as an alarmin and cell death results in its liberation in the extracellular space after disruption of the cell membrane to induce inflammation and alert the host to injury or damage. In addition to its role as a danger signal, which occurs when the cytokine is passively released by cell necrosis, directly senses DNA damage and acts as signal for genotoxic stress without loss of cell integrity. This chain is Interleukin-1 alpha (IL1A), found in Macaca fascicularis (Crab-eating macaque).